A 395-amino-acid polypeptide reads, in one-letter code: Putative transport protein sll0063 (395 aa).

8 consecutive transmembrane segments (helical) span residues 24–44 (LNAI…VLNA), 50–70 (IFGY…IAFL), 91–111 (FVFL…IPLA), 180–200 (VFTV…FYLL), 245–265 (ALGL…LFGL), 269–289 (VMAL…FLVA), 295–315 (MALQ…NGIA), and 328–348 (FWVL…GVIV).

This sequence belongs to the autoinducer-2 exporter (AI-2E) (TC 2.A.86) family.

Its subcellular location is the cell membrane. The sequence is that of Putative transport protein sll0063 from Synechocystis sp. (strain ATCC 27184 / PCC 6803 / Kazusa).